The sequence spans 256 residues: Small ribosomal subunit protein uS2 (256 aa).

It belongs to the universal ribosomal protein uS2 family.

In Acidiphilium cryptum (strain JF-5), this protein is Small ribosomal subunit protein uS2.